Consider the following 356-residue polypeptide: Altered inheritance of mitochondria protein 23, mitochondrial (356 aa).

The N-terminal 32 residues, 1-32 (MLKVPLSDVLSQKMLFLKSFRYFHCTKYFSRD), are a transit peptide targeting the mitochondrion.

The protein belongs to the AIM23 family.

The protein resides in the mitochondrion. In Saccharomyces cerevisiae (strain ATCC 204508 / S288c) (Baker's yeast), this protein is Altered inheritance of mitochondria protein 23, mitochondrial (AIM23).